The sequence spans 213 residues: Thymidylate kinase (213 aa).

10 to 17 (GPDGAGKT) serves as a coordination point for ATP.

Belongs to the thymidylate kinase family.

The enzyme catalyses dTMP + ATP = dTDP + ADP. Functionally, phosphorylation of dTMP to form dTDP in both de novo and salvage pathways of dTTP synthesis. This Limosilactobacillus reuteri (strain DSM 20016) (Lactobacillus reuteri) protein is Thymidylate kinase.